A 497-amino-acid polypeptide reads, in one-letter code: uncharacterized protein (497 aa).

A disordered region spans residues 58–79 (ISTRSFRNDGNDSDPQTLDPDA). The next 12 helical transmembrane spans lie at 86-106 (IAFV…ALPI), 120-140 (FSGL…YPML), 155-175 (FRPL…YSLA), 180-200 (WLYL…MFLY), 222-242 (LNIL…GLLA), 258-278 (VGSW…SIFF), 309-329 (FMLV…AGYQ), 348-368 (GNFL…STFL), 378-398 (MLYG…LDVL), 407-427 (FVLY…LISL), 438-458 (ILVG…GAIC), and 468-488 (VGFI…LLFL).

It belongs to the major facilitator superfamily.

Its subcellular location is the membrane. This is an uncharacterized protein from Schizosaccharomyces pombe (strain 972 / ATCC 24843) (Fission yeast).